The sequence spans 550 residues: Transcription factor p65 (550 aa).

Met1 carries the post-translational modification N-acetylmethionine. Positions 16–190 (ASGPYVEIIE…HPIFDNRAPN (175 aa)) constitute an RHD domain. Residue Lys37 forms a Glycyl lysine isopeptide (Lys-Gly) (interchain with G-Cter in SUMO3) linkage. Cys38 is subject to Cysteine persulfide; alternate. Cys38 is modified (S-nitrosocysteine; alternate). Residues Lys122, Lys123, Lys218, and Lys221 each carry the N6-acetyllysine modification. Residues Lys122 and Lys123 each participate in a glycyl lysine isopeptide (Lys-Gly) (interchain with G-Cter in SUMO3); alternate cross-link. A Phosphothreonine modification is found at Thr254. 2 positions are modified to phosphoserine: Ser276 and Ser281. The Nuclear localization signal motif lies at 301–304 (KRKR). Lys310 is modified (N6-acetyllysine; alternate). Residue Lys310 is modified to N6-methyllysine. Ser311 is modified (phosphoserine). Transcriptional activation domain regions lie at residues 342 to 388 (PKPA…APVL) and 414 to 476 (PGPP…EFQQ). Phosphothreonine is present on Thr434. Ser468 is modified (phosphoserine). At Thr505 the chain carries Phosphothreonine. A transcriptional activation domain 2 region spans residues 520 to 550 (TSGLPNGLSGDEDFSSIADMDFSALLSQISS). Phosphoserine is present on Ser535. The 9aaTAD signature appears at 535-543 (SIADMDFSA).

Component of the NF-kappa-B p65-p50 complex. Component of the NF-kappa-B p65-c-Rel complex. Homodimer; component of the NF-kappa-B p65-p65 complex. Component of the NF-kappa-B p65-p52 complex. May interact with ETHE1. Binds TLE5 and TLE1. Interacts with TP53BP2. Binds to and is phosphorylated by the activated form of either RPS6KA4 or RPS6KA5. Interacts with ING4 and this interaction may be indirect. Interacts with CARM1, USP48 and UNC5CL. Interacts with IRAK1BP1. Interacts with NFKBID. Interacts with NFKBIA. Interacts with GSK3B. Interacts with NFKBIB. Interacts with NFKBIE. Interacts with NFKBIZ. Interacts with EHMT1 (via ANK repeats). Part of a 70-90 kDa complex at least consisting of CHUK, IKBKB, NFKBIA, RELA, ELP1 and MAP3K14. Interacts with HDAC3; HDAC3 mediates the deacetylation of RELA. Interacts with HDAC1; the interaction requires non-phosphorylated RELA. Interacts with CBP; the interaction requires phosphorylated RELA. Interacts (phosphorylated at 'Thr-254') with PIN1; the interaction inhibits p65 binding to NFKBIA. Interacts with SOCS1. Interacts with UXT. Interacts with MTDH and PHF11. Interacts with ARRB2. Interacts with NFKBIA (when phosphorylated), the interaction is direct; phosphorylated NFKBIA is part of a SCF(BTRC)-like complex lacking CUL1. Interacts with RNF25. Interacts (via C-terminus) with DDX1. Interacts with UFL1 and COMMD1. Interacts with BRMS1; this promotes deacetylation of 'Lys-310'. Interacts with NOTCH2. Directly interacts with MEN1; this interaction represses NFKB-mediated transactivation. Interacts with AKIP1, which promotes the phosphorylation and nuclear retention of RELA. Interacts (via the RHD) with GFI1; the interaction, after bacterial lipopolysaccharide (LPS) stimulation, inhibits the transcriptional activity by interfering with the DNA-binding activity to target gene promoter DNA. Interacts (when acetylated at Lys-310) with BRD4; leading to activation of the NF-kappa-B pathway. Interacts with MEFV. Interacts with CLOCK. Interacts (via N-terminus) with CPEN1; this interaction induces proteolytic cleavage of p65/RELA subunit and inhibition of NF-kappa-B transcriptional activity. Interacts with FOXP3. Interacts with CDK5RAP3; stimulates the interaction of RELA with HDAC1, HDAC2 and HDAC3 thereby inhibiting NF-kappa-B transcriptional activity. Interacts with DHX9; this interaction is direct and activates NF-kappa-B-mediated transcription. Interacts with LRRC25. Interacts with TBX21. Interacts with KAT2A. Interacts with ZBTB7A; involved in the control by RELA of the accessibility of target gene promoters. Directly interacts with DDX3X; this interaction may trap RELA in the cytoplasm, impairing nuclear relocalization upon TNF activating signals. Interacts with PHF2. Interacts with MKRN2; the interaction leads to its polyubiquitination and proteasome-dependent degradation. Interacts with ECSIT. Interacts with RAB28; the interaction contributes to RELA transport from cytoplasm to nucleus. Post-translationally, ubiquitinated by RNF182, leading to its proteasomal degradation. Degradation is required for termination of NF-kappa-B response. Polyubiquitinated via 'Lys-29'-linked ubiquitin; leading to lysosomal degradation. In terms of processing, monomethylated at Lys-310 by SETD6. Monomethylation at Lys-310 is recognized by the ANK repeats of EHMT1 and promotes the formation of repressed chromatin at target genes, leading to down-regulation of NF-kappa-B transcription factor activity. Phosphorylation at Ser-311 disrupts the interaction with EHMT1 without preventing monomethylation at Lys-310 and relieves the repression of target genes. Phosphorylation at Ser-311 disrupts the interaction with EHMT1 and promotes transcription factor activity. Phosphorylation on Ser-535 stimulates acetylation on Lys-310 and interaction with CBP; the phosphorylated and acetylated forms show enhanced transcriptional activity. Phosphorylation at Ser-276 by RPS6KA4 and RPS6KA5 promotes its transactivation and transcriptional activities. Post-translationally, phosphorylation at Ser-75 by herpes simplex virus 1/HHV-1 inhibits NF-kappa-B activation. In terms of processing, reversibly acetylated; the acetylation seems to be mediated by CBP, the deacetylation by HDAC3 and SIRT2. Acetylation at Lys-122 enhances DNA binding and impairs association with NFKBIA. Acetylation at Lys-310 is required for full transcriptional activity in the absence of effects on DNA binding and NFKBIA association. Acetylation at Lys-310 promotes interaction with BRD4. Acetylation can also lower DNA-binding and results in nuclear export. Interaction with BRMS1 promotes deacetylation of Lys-310. Lys-310 is deacetylated by SIRT2. S-nitrosylation of Cys-38 inactivates the enzyme activity. Post-translationally, sulfhydration at Cys-38 mediates the anti-apoptotic activity by promoting the interaction with RPS3 and activating the transcription factor activity. In terms of processing, sumoylation by PIAS3 negatively regulates DNA-bound activated NF-kappa-B. Proteolytically cleaved within a conserved N-terminus region required for base-specific contact with DNA in a CPEN1-mediated manner, and hence inhibits NF-kappa-B transcriptional activity.

Its subcellular location is the nucleus. It is found in the cytoplasm. Functionally, NF-kappa-B is a pleiotropic transcription factor present in almost all cell types and is the endpoint of a series of signal transduction events that are initiated by a vast array of stimuli related to many biological processes such as inflammation, immunity, differentiation, cell growth, tumorigenesis and apoptosis. NF-kappa-B is a homo- or heterodimeric complex formed by the Rel-like domain-containing proteins RELA/p65, RELB, NFKB1/p105, NFKB1/p50, REL and NFKB2/p52. The heterodimeric RELA-NFKB1 complex appears to be most abundant one. The dimers bind at kappa-B sites in the DNA of their target genes and the individual dimers have distinct preferences for different kappa-B sites that they can bind with distinguishable affinity and specificity. Different dimer combinations act as transcriptional activators or repressors, respectively. The NF-kappa-B heterodimeric RELA-NFKB1 and RELA-REL complexes, for instance, function as transcriptional activators. NF-kappa-B is controlled by various mechanisms of post-translational modification and subcellular compartmentalization as well as by interactions with other cofactors or corepressors. NF-kappa-B complexes are held in the cytoplasm in an inactive state complexed with members of the NF-kappa-B inhibitor (I-kappa-B) family. In a conventional activation pathway, I-kappa-B is phosphorylated by I-kappa-B kinases (IKKs) in response to different activators, subsequently degraded thus liberating the active NF-kappa-B complex which translocates to the nucleus. The inhibitory effect of I-kappa-B on NF-kappa-B through retention in the cytoplasm is exerted primarily through the interaction with RELA. RELA shows a weak DNA-binding site which could contribute directly to DNA binding in the NF-kappa-B complex. Besides its activity as a direct transcriptional activator, it is also able to modulate promoters accessibility to transcription factors and thereby indirectly regulate gene expression. Associates with chromatin at the NF-kappa-B promoter region via association with DDX1. Essential for cytokine gene expression in T-cells. The NF-kappa-B homodimeric RELA-RELA complex appears to be involved in invasin-mediated activation of IL-8 expression. Key transcription factor regulating the IFN response during SARS-CoV-2 infection. This chain is Transcription factor p65, found in Rattus norvegicus (Rat).